We begin with the raw amino-acid sequence, 1060 residues long: Histone lysine demethylase PHF8 (1060 aa).

The PHD-type zinc-finger motif lies at 41–92 (PVYCLCRLPYDVTRFMIECDMCQDWFHGSCVGVEEEKAADIDLYHCPNCEVL). At serine 69 the chain carries Phosphoserine; by CDK1. The tract at residues 100–120 (KRRGSSKGHDTHKGKPVKTGS) is disordered. Positions 101–115 (RRGSSKGHDTHKGKP) are linker. Serine 120 bears the Phosphoserine; by CDK1 mark. The JmjC domain maps to 231–387 (FSDTRLSNLV…MQLKAYEIEK (157 aa)). Threonine 280 lines the substrate pocket. Histidine 283 and aspartate 285 together coordinate Fe cation. Substrate is bound at residue lysine 300. A Fe cation-binding site is contributed by histidine 355. Over residues 508–517 (AHSTSVSMSR) the composition is skewed to polar residues. The interval 508–534 (AHSTSVSMSRLSLPSKNGSKKKGLKPK) is disordered. Serine 651 is subject to Phosphoserine. Tyrosine 704 is subject to Phosphotyrosine. Phosphothreonine occurs at positions 705 and 706. Serine 722 is modified (phosphoserine). 3 disordered regions span residues 768–840 (QSSS…EQDS), 852–902 (YPSL…GTRV), and 915–1046 (KLAQ…KQRL). Low complexity-rich tracts occupy residues 769 to 778 (SSSSSPATSS) and 785 to 804 (GGQDRSSGSSSSGLGTVSNS). Serine 804, serine 826, serine 834, serine 854, serine 857, and serine 880 each carry phosphoserine. Acidic residues predominate over residues 826–839 (SEEEEENASLDEQD). Over residues 891-900 (KQDRPVREGT) the composition is skewed to basic and acidic residues. Over residues 924–934 (AQKKKYIKKKP) the composition is skewed to basic residues. A compositionally biased stretch (polar residues) spans 1018–1030 (RRPSVGSQSNQAG).

It belongs to the JHDM1 histone demethylase family. JHDM1D subfamily. In terms of assembly, interacts with POLR1B, UBTF, SETD1A, HCFC1, E2F1 and ZNF711. Interacts with ZNF263; recruited to the SIX3 promoter along with other proteins involved in chromatin modification and transcriptional corepression where it contributes to transcriptional repression. Fe(2+) is required as a cofactor. In terms of processing, phosphorylation at Ser-69 and Ser-120 are required for dissociation from chromatin and accumulation of H4K20Me1 levels during prophase.

The protein resides in the nucleus. It is found in the nucleolus. It carries out the reaction N(6),N(6)-dimethyl-L-lysyl(36)-[histone H3] + 2 2-oxoglutarate + 2 O2 = L-lysyl(36)-[histone H3] + 2 formaldehyde + 2 succinate + 2 CO2. It catalyses the reaction N(6),N(6)-dimethyl-L-lysyl(9)-[histone H3] + 2 2-oxoglutarate + 2 O2 = L-lysyl(9)-[histone H3] + 2 formaldehyde + 2 succinate + 2 CO2. Functionally, histone lysine demethylase with selectivity for the di- and monomethyl states that plays a key role cell cycle progression, rDNA transcription and brain development. Demethylates mono- and dimethylated histone H3 'Lys-9' residue (H3K9Me1 and H3K9Me2), dimethylated H3 'Lys-27' (H3K27Me2) and monomethylated histone H4 'Lys-20' residue (H4K20Me1). Acts as a transcription activator as H3K9Me1, H3K9Me2, H3K27Me2 and H4K20Me1 are epigenetic repressive marks. Involved in cell cycle progression by being required to control G1-S transition. Acts as a coactivator of rDNA transcription, by activating polymerase I (pol I) mediated transcription of rRNA genes. Required for brain development, probably by regulating expression of neuron-specific genes. Only has activity toward H4K20Me1 when nucleosome is used as a substrate and when not histone octamer is used as substrate. May also have weak activity toward dimethylated H3 'Lys-36' (H3K36Me2), however, the relevance of this result remains unsure in vivo. Specifically binds trimethylated 'Lys-4' of histone H3 (H3K4me3), affecting histone demethylase specificity: has weak activity toward H3K9Me2 in absence of H3K4me3, while it has high activity toward H3K9me2 when binding H3K4me3. Positively modulates transcription of histone demethylase KDM5C, acting synergistically with transcription factor ARX; synergy may be related to enrichment of histone H3K4me3 in regulatory elements. The protein is Histone lysine demethylase PHF8 (PHF8) of Homo sapiens (Human).